The following is a 550-amino-acid chain: M-phase inducer phosphatase 1-B (550 aa).

Disordered stretches follow at residues 76–98 and 285–335; these read NLGD…GKVE and SPSM…QRRG. The segment covering 290-310 has biased composition (basic and acidic residues); sequence EKLDRPMLKRPVRPLDSETPV. Residues 322–335 show a composition bias toward polar residues; that stretch reads LQPQEENFQPQRRG. The Rhodanese domain occupies 401 to 508; the sequence is LVEKIFIIDC…FFPEYKELCE (108 aa). Cys457 is an active-site residue.

Belongs to the MPI phosphatase family.

The enzyme catalyses O-phospho-L-tyrosyl-[protein] + H2O = L-tyrosyl-[protein] + phosphate. Functionally, tyrosine protein phosphatase which functions as a dosage-dependent inducer of mitotic progression. Directly dephosphorylates CDK1 and stimulates its kinase activity. This Xenopus laevis (African clawed frog) protein is M-phase inducer phosphatase 1-B (cdc25-1-b).